The following is a 657-amino-acid chain: Tyramine beta-hydroxylase (657 aa).

The helical transmembrane segment at 77–97 threads the bilayer; it reads VALLFLLVAYCGGVVHAGEIV. One can recognise a DOMON domain in the interval 103–214; it reads TNVTVKWHTD…GTTQFYIAAS (112 aa). Residues Asn-104 and Asn-143 are each glycosylated (N-linked (GlcNAc...) asparagine). Tyr-278 is a catalytic residue. Intrachain disulfides connect Cys-280/Cys-330 and Cys-319/Cys-342. Cu(2+) contacts are provided by His-312 and His-313. Residues His-380, His-458, His-460, and Met-533 each contribute to the Cu(2+) site. Intrachain disulfides connect Cys-437–Cys-549, Cys-441–Cys-606, and Cys-512–Cys-534. The active site involves His-458. N-linked (GlcNAc...) asparagine glycosylation occurs at Asn-555.

It belongs to the copper type II ascorbate-dependent monooxygenase family. Cu(2+) is required as a cofactor. Present in synaptic regions of RIC interneurons. Present in gonadal sheath cells of hermaphrodites (at protein level).

It localises to the membrane. The catalysed reaction is tyramine + L-ascorbate + O2 = (R)-octopamine + L-dehydroascorbate + H2O. In terms of biological role, required for the conversion of tyramine to octopamine, a precursor of octapamine but probably itself a neurotransmitter. Involved in the regulation of egg laying, which is inhibited by tyramine. Due to its involvement in octopamine biosynthesis, also required for crtc-1-dependent regulation of AMPK-mediated longevity. The sequence is that of Tyramine beta-hydroxylase from Caenorhabditis elegans.